Here is a 352-residue protein sequence, read N- to C-terminus: Cell division protein ZipA (352 aa).

Residues 1–6 (MKDLQL) are Periplasmic-facing. The chain crosses the membrane as a helical span at residues 7–27 (VLFVLGAIAIIAVLVHGFWSI). The Cytoplasmic segment spans residues 28 to 352 (RKQQPKSMKQ…KDYLRRLNAA (325 aa)). 2 disordered regions span residues 78-120 (KPVL…HVEP) and 138-160 (PAPTASTSMNTPKKIFNPSTSTA). Residues 83 to 105 (TNLSQKPHSGTTKLTDTPLQDSL) are compositionally biased toward polar residues. The segment covering 111 to 120 (HKTEPEHVEP) has biased composition (basic and acidic residues). Positions 141 to 160 (TASTSMNTPKKIFNPSTSTA) are enriched in polar residues.

The protein belongs to the ZipA family. As to quaternary structure, interacts with FtsZ via their C-terminal domains.

The protein resides in the cell inner membrane. In terms of biological role, essential cell division protein that stabilizes the FtsZ protofilaments by cross-linking them and that serves as a cytoplasmic membrane anchor for the Z ring. Also required for the recruitment to the septal ring of downstream cell division proteins. This is Cell division protein ZipA from Shewanella frigidimarina (strain NCIMB 400).